The chain runs to 279 residues: Prohibitin-4, mitochondrial (279 aa).

Position 2 is an N-acetylglycine (Gly-2). Over Gly-2 to Val-6 the chain is Mitochondrial matrix. The chain crosses the membrane as a helical; Signal-anchor for type II membrane protein span at residues Ala-7–Leu-28. Residues Asn-29–Arg-279 are Mitochondrial intermembrane-facing.

Belongs to the prohibitin family. As to quaternary structure, component of a prohibitin multimeric complex in mitochondrial membranes. As to expression, mostly expressed in proliferative tissues, including vasculature, shoot and root apical tissues. Accumulates in dry seeds.

Its subcellular location is the mitochondrion inner membrane. In terms of biological role, prohibitin probably acts as a holdase/unfoldase for the stabilization of newly synthesized mitochondrial proteins. The sequence is that of Prohibitin-4, mitochondrial (PHB4) from Arabidopsis thaliana (Mouse-ear cress).